The chain runs to 242 residues: MRIMQLDRHSLGFPSPEQALHDPNGLLAIGGDLQPARLLQAYQRGIFPWFSPGELILWWSPDPRAVLVPQALHISHSLRKALRRTTLRITLNQAFAAVIAGCAEQRAEGTWIGPSIQQAYCQLHQLGHAHSVEVWQEERLVGGLYGVAQGSLFCGESMFSRVSNASKMALWSFCSHFQRMGGQLIDCQVLNAHTASLGAHDIPRRRYLQHLLNCRSQTLAPRCWLPQSLTLPLPATATQIGE.

It belongs to the L/F-transferase family.

The protein localises to the cytoplasm. The catalysed reaction is N-terminal L-lysyl-[protein] + L-leucyl-tRNA(Leu) = N-terminal L-leucyl-L-lysyl-[protein] + tRNA(Leu) + H(+). The enzyme catalyses N-terminal L-arginyl-[protein] + L-leucyl-tRNA(Leu) = N-terminal L-leucyl-L-arginyl-[protein] + tRNA(Leu) + H(+). It catalyses the reaction L-phenylalanyl-tRNA(Phe) + an N-terminal L-alpha-aminoacyl-[protein] = an N-terminal L-phenylalanyl-L-alpha-aminoacyl-[protein] + tRNA(Phe). Its function is as follows. Functions in the N-end rule pathway of protein degradation where it conjugates Leu, Phe and, less efficiently, Met from aminoacyl-tRNAs to the N-termini of proteins containing an N-terminal arginine or lysine. The polypeptide is Leucyl/phenylalanyl-tRNA--protein transferase (Edwardsiella ictaluri (strain 93-146)).